The sequence spans 824 residues: Mucosa-associated lymphoid tissue lymphoma translocation protein 1 (824 aa).

Residues 1 to 27 (MSLLGDPLQALPPSAAPTGPLLAPPAG) form a disordered region. Serine 2 carries the N-acetylserine modification. Low complexity predominate over residues 11–27 (LPPSAAPTGPLLAPPAG). Residues 39 to 126 (RRLSELLDQA…EVLQLLSPPG (88 aa)) enclose the Death domain. Ig-like C2-type domains lie at 125–201 (PGIK…FEFS) and 212–305 (PESF…KKVE). Phosphoserine is present on serine 135. Disulfide bonds link cysteine 147–cysteine 190 and cysteine 248–cysteine 290. Positions 348 to 562 (IGNMNYREHP…SLSEKRALTD (215 aa)) are caspase-like. The short motif at 369 to 376 (LTNLLRQL) is the Nuclear export signal element. Catalysis depends on residues histidine 415 and cysteine 464.

It belongs to the peptidase C14B family. As to quaternary structure, homooligomer; forms oligomers which bind to TRAF6. Forms a complex with CARD14 and MALT1; resulting in the formation of a CBM (CARD14-BCL10-MALT1) complex. Forms a complex with CARD11 and MALT1; resulting in the formation of a CBM (CARD11-BCL10-MALT1) complex. Forms a complex with CARD9 and MALT1; resulting in the formation of a CBM (CARD9-BCL10-MALT1) complex. Highly expressed in peripheral blood mononuclear cells. Detected at lower levels in bone marrow, thymus and lymph node, and at very low levels in colon and lung.

It is found in the cytoplasm. The protein localises to the perinuclear region. Its subcellular location is the nucleus. Protease that enhances BCL10-induced activation: acts via formation of CBM complexes that channel adaptive and innate immune signaling downstream of CARD domain-containing proteins (CARD9, CARD11 and CARD14) to activate NF-kappa-B and MAP kinase p38 pathways which stimulate expression of genes encoding pro-inflammatory cytokines and chemokines. Mediates BCL10 cleavage: MALT1-dependent BCL10 cleavage plays an important role in T-cell antigen receptor-induced integrin adhesion. Involved in the induction of T helper 17 cells (Th17) differentiation. Cleaves RC3H1 and ZC3H12A in response to T-cell receptor (TCR) stimulation which releases their cooperatively repressed targets to promote Th17 cell differentiation. Also mediates cleavage of N4BP1 in T-cells following TCR-mediated activation, leading to N4BP1 inactivation. May also have ubiquitin ligase activity: binds to TRAF6, inducing TRAF6 oligomerization and activation of its ligase activity. In Homo sapiens (Human), this protein is Mucosa-associated lymphoid tissue lymphoma translocation protein 1.